The sequence spans 280 residues: Golgi phosphoprotein 3-like B (280 aa).

A disordered region spans residues 1–32 (MTTLIRRGRRAEEGQERRADSEDSIKDKDEED). The span at 10 to 32 (RAEEGQERRADSEDSIKDKDEED) shows a compositional bias: basic and acidic residues. A 1,2-diacyl-sn-glycero-3-phospho-(1D-myo-inositol 4-phosphate) contacts are provided by Trp62, Arg71, Arg152, and Arg155. Residues 171-182 (EKQNFLLFDMTT) are beta-hairpin required for oligomerization.

It belongs to the GOLPH3/VPS74 family. Homooligomer.

It is found in the golgi apparatus. It localises to the golgi stack membrane. The protein localises to the trans-Golgi network membrane. Phosphatidylinositol-4-phosphate-binding protein that may play a role in the process of vesicle budding at the Golgi and anterograde transport to the plasma membrane. The polypeptide is Golgi phosphoprotein 3-like B (golph3l-b) (Xenopus laevis (African clawed frog)).